Reading from the N-terminus, the 323-residue chain is tRNA U34 carboxymethyltransferase (323 aa).

Carboxy-S-adenosyl-L-methionine-binding positions include Lys-91, Trp-105, Lys-110, Gly-130, 152 to 154 (DPT), 181 to 182 (IE), Met-196, Tyr-200, and Arg-315.

Belongs to the class I-like SAM-binding methyltransferase superfamily. CmoB family. In terms of assembly, homotetramer.

The catalysed reaction is carboxy-S-adenosyl-L-methionine + 5-hydroxyuridine(34) in tRNA = 5-carboxymethoxyuridine(34) in tRNA + S-adenosyl-L-homocysteine + H(+). Its function is as follows. Catalyzes carboxymethyl transfer from carboxy-S-adenosyl-L-methionine (Cx-SAM) to 5-hydroxyuridine (ho5U) to form 5-carboxymethoxyuridine (cmo5U) at position 34 in tRNAs. The chain is tRNA U34 carboxymethyltransferase from Shigella boydii serotype 18 (strain CDC 3083-94 / BS512).